A 451-amino-acid polypeptide reads, in one-letter code: MVIRVLFRPVSLIPVNNSSTPQSQGPISRRLALTALGFGVLAPNVLVACAGKVTKLAEKRPPPAPRLTFRPADSAADVVPIAPISVEVGDGWFQRVALTNSAGKVVAGAYSRDRTIYTITEPLGYDTTYTWSGSAVGHDGKAVPVAGKFTTVAPVKTINAGFQLADGQTVGIAAPVIIQFDSPISDKAAVERALTVTTDPPVEGGWAWLPDEAQGARVHWRPREYYPAGTTVDVDAKLYGLPFGDGAYGAQDMSLHFQIGRRQVVKAEVSSHRIQVVTDAGVIMDFPCSYGEADLARNVTRNGIHVVTEKYSDFYMSNPAAGYSHIHERWAVRISNNGEFIHANPMSAGAQGNSNVTNGCINLSTENAEQYYRSAVYGDPVEVTGSSIQLSYADGDIWDWAVDWDTWVSMSALPPPAAKPAATQIPVTAPVTPSDAPTPSGTPTTTNGPGG.

The L,D-TPase catalytic domain occupies glutamine 263–threonine 384. Substrate is bound by residues tyrosine 323 and asparagine 337–glycine 338. Histidine 342 functions as the Proton donor/acceptor in the catalytic mechanism. Cysteine 360 functions as the Nucleophile in the catalytic mechanism. Asparagine 362 contacts substrate. Residues alanine 417–glycine 451 form a disordered region. Low complexity predominate over residues proline 437 to glycine 451.

Its pathway is cell wall biogenesis; peptidoglycan biosynthesis. With respect to regulation, in contrast to other LDT paralogs, LdtMt5 is not inactivated by the beta-lactam carbapenems; beta-lactam carbapenems form covalent adducts with other LDT paralogs but the formation of covalent adducts was not detected for LdtMt5. Its function is as follows. Generates 3-&gt;3 cross-links in peptidoglycan, catalyzing the cleavage of the mDap(3)-D-Ala(4) bond of a tetrapeptide donor stem and the formation of a bond between the carbonyl of mDap(3) of the donor stem and the side chain of mDap(3) of the acceptor stem. Is specific for donor substrates containing a stem tetrapeptide since it cannot use pentapeptide stems. This is L,D-transpeptidase 5 (lprQ) from Mycobacterium tuberculosis (strain ATCC 25618 / H37Rv).